A 251-amino-acid chain; its full sequence is Ubiquinone/menaquinone biosynthesis C-methyltransferase UbiE (251 aa).

S-adenosyl-L-methionine is bound by residues threonine 74, aspartate 95, 123 to 124, and serine 140; that span reads NA.

Belongs to the class I-like SAM-binding methyltransferase superfamily. MenG/UbiE family.

It carries out the reaction a 2-demethylmenaquinol + S-adenosyl-L-methionine = a menaquinol + S-adenosyl-L-homocysteine + H(+). The enzyme catalyses a 2-methoxy-6-(all-trans-polyprenyl)benzene-1,4-diol + S-adenosyl-L-methionine = a 5-methoxy-2-methyl-3-(all-trans-polyprenyl)benzene-1,4-diol + S-adenosyl-L-homocysteine + H(+). The protein operates within quinol/quinone metabolism; menaquinone biosynthesis; menaquinol from 1,4-dihydroxy-2-naphthoate: step 2/2. Its pathway is cofactor biosynthesis; ubiquinone biosynthesis. In terms of biological role, methyltransferase required for the conversion of demethylmenaquinol (DMKH2) to menaquinol (MKH2) and the conversion of 2-polyprenyl-6-methoxy-1,4-benzoquinol (DDMQH2) to 2-polyprenyl-3-methyl-6-methoxy-1,4-benzoquinol (DMQH2). This Proteus mirabilis (strain HI4320) protein is Ubiquinone/menaquinone biosynthesis C-methyltransferase UbiE.